Here is a 448-residue protein sequence, read N- to C-terminus: N-succinylarginine dihydrolase (448 aa).

Substrate is bound by residues 19–28 (GGLSYGNVAS), Asn-110, and 137–138 (HR). Glu-174 is an active-site residue. Position 214 (Arg-214) interacts with substrate. His-250 is an active-site residue. Substrate-binding residues include Asp-252 and Asn-365. Cys-371 (nucleophile) is an active-site residue.

This sequence belongs to the succinylarginine dihydrolase family. In terms of assembly, homodimer.

It carries out the reaction N(2)-succinyl-L-arginine + 2 H2O + 2 H(+) = N(2)-succinyl-L-ornithine + 2 NH4(+) + CO2. The protein operates within amino-acid degradation; L-arginine degradation via AST pathway; L-glutamate and succinate from L-arginine: step 2/5. Functionally, catalyzes the hydrolysis of N(2)-succinylarginine into N(2)-succinylornithine, ammonia and CO(2). The polypeptide is N-succinylarginine dihydrolase (Ectopseudomonas mendocina (strain ymp) (Pseudomonas mendocina)).